We begin with the raw amino-acid sequence, 157 residues long: Aspartate carbamoyltransferase regulatory chain (157 aa).

Residues Cys-108, Cys-113, Cys-138, and Cys-141 each coordinate Zn(2+).

It belongs to the PyrI family. In terms of assembly, contains catalytic and regulatory chains. It depends on Zn(2+) as a cofactor.

Involved in allosteric regulation of aspartate carbamoyltransferase. This Ignicoccus hospitalis (strain KIN4/I / DSM 18386 / JCM 14125) protein is Aspartate carbamoyltransferase regulatory chain.